The sequence spans 309 residues: Tumor necrosis factor ligand superfamily member 13B (309 aa).

Topologically, residues 1–47 (MDESAKTLPPPCLCFCSEKGEDMKVGYDPITPQKEEGAWFGICRDGR) are cytoplasmic. A helical; Signal-anchor for type II membrane protein transmembrane segment spans residues 48 to 68 (LLAATLLLALLSSSFTAMSLY). Topologically, residues 69-309 (QLAALQADLM…DTFFGALKLL (241 aa)) are extracellular. The interval 110–140 (PAAPRPHNSSRGHRNRRAFQGPEETEQDVDL) is disordered. Residues asparagine 117 and asparagine 266 are each glycosylated (N-linked (GlcNAc...) asparagine). Over residues 117 to 126 (NSSRGHRNRR) the composition is skewed to basic residues. One can recognise a THD domain in the interval 169–308 (DCLQLIADSD…DDTFFGALKL (140 aa)). An intrachain disulfide couples cysteine 256 to cysteine 269.

It belongs to the tumor necrosis factor family. In terms of assembly, homotrimer. Isoform 2 heteromultimerizes with isoform 1, probably limiting the amount of functional isoform 1 on the cell surface. The soluble form derives from the membrane form by proteolytic processing. Post-translationally, isoform 2 is not efficiently shed from the membrane unlike isoform 1. As to expression, isoform 2 is expressed in many myeloid cell lines.

The protein resides in the cell membrane. It is found in the secreted. Functionally, cytokine that binds to TNFRSF13B/TACI and TNFRSF17/BCMA. TNFSF13/APRIL binds to the same 2 receptors. Together, they form a 2 ligands -2 receptors pathway involved in the stimulation of B- and T-cell function and the regulation of humoral immunity. A third B-cell specific BAFF-receptor (BAFFR/BR3) promotes the survival of mature B-cells and the B-cell response. Its function is as follows. Isoform 2 seems to inhibit isoform 1 secretion and bioactivity. This Mus musculus (Mouse) protein is Tumor necrosis factor ligand superfamily member 13B (Tnfsf13b).